Here is a 376-residue protein sequence, read N- to C-terminus: Alpha-2,8-sialyltransferase 8E (376 aa).

At 1–17 the chain is on the cytoplasmic side; that stretch reads MRYADPSANRDLLGSRT. The chain crosses the membrane as a helical; Signal-anchor for type II membrane protein span at residues 18–38; it reads LLFIFICAFALVTLLQQILYG. Residues 39-376 lie on the Lumenal side of the membrane; sequence RNYIKRYFEF…RVHTGTCSCC (338 aa). 2 N-linked (GlcNAc...) asparagine glycosylation sites follow: asparagine 56 and asparagine 96. Disulfide bonds link cysteine 164/cysteine 313 and cysteine 178/cysteine 373. Substrate is bound by residues asparagine 192 and 214–216; that span reads NPS. Asparagine 241 and asparagine 284 each carry an N-linked (GlcNAc...) asparagine glycan. Residue 300–302 coordinates substrate; sequence STG. Residue histidine 348 is the Proton donor/acceptor of the active site.

It belongs to the glycosyltransferase 29 family. In terms of tissue distribution, expressed in fetal and adult brain, adult heart and skeletal muscle. As to expression, expressed in fetal and adult brain, not detected in adult heart and skeletal muscle.

It localises to the golgi apparatus membrane. The enzyme catalyses a ganglioside GT1b (d18:1(4E)) + CMP-N-acetyl-beta-neuraminate = a ganglioside GQ1b (d18:1(4E)) + CMP + H(+). The catalysed reaction is a ganglioside GD3 (d18:1(4E)) + CMP-N-acetyl-beta-neuraminate = a ganglioside GT3 (d18:1(4E)) + CMP + H(+). It catalyses the reaction a ganglioside GD1a (d18:1(4E)) + CMP-N-acetyl-beta-neuraminate = a ganglioside GT1a (d18:1(4E)) + CMP + H(+). It carries out the reaction a ganglioside GM1b (d18:1(4E)) + CMP-N-acetyl-beta-neuraminate = a ganglioside GD1c (d18:1(4E)) + CMP + H(+). The enzyme catalyses a ganglioside GQ1c (d18:1(4E)) + CMP-N-acetyl-beta-neuraminate = a ganglioside GP1c (d18:1(4E)) + CMP + H(+). Its pathway is protein modification; protein glycosylation. Its function is as follows. Involved in the synthesis of gangliosides GD1c, GT1a, GQ1b, GP1c and GT3 from GD1a, GT1b, GM1b and GD3 respectively. The polypeptide is Alpha-2,8-sialyltransferase 8E (Homo sapiens (Human)).